Here is a 155-residue protein sequence, read N- to C-terminus: Ribosomal RNA large subunit methyltransferase H (155 aa).

S-adenosyl-L-methionine-binding positions include L73, G104, and 123 to 128 (LSALTL).

The protein belongs to the RNA methyltransferase RlmH family. Homodimer.

The protein localises to the cytoplasm. It catalyses the reaction pseudouridine(1915) in 23S rRNA + S-adenosyl-L-methionine = N(3)-methylpseudouridine(1915) in 23S rRNA + S-adenosyl-L-homocysteine + H(+). Specifically methylates the pseudouridine at position 1915 (m3Psi1915) in 23S rRNA. This is Ribosomal RNA large subunit methyltransferase H from Chromohalobacter salexigens (strain ATCC BAA-138 / DSM 3043 / CIP 106854 / NCIMB 13768 / 1H11).